Consider the following 702-residue polypeptide: Polyribonucleotide nucleotidyltransferase (702 aa).

Positions 485 and 491 each coordinate Mg(2+). Positions Pro-552–Ile-611 constitute a KH domain. The S1 motif domain occupies Gly-621–Lys-689.

It belongs to the polyribonucleotide nucleotidyltransferase family. Component of the RNA degradosome, which is a multiprotein complex involved in RNA processing and mRNA degradation. Mg(2+) is required as a cofactor.

The protein resides in the cytoplasm. It carries out the reaction RNA(n+1) + phosphate = RNA(n) + a ribonucleoside 5'-diphosphate. In terms of biological role, involved in mRNA degradation. Catalyzes the phosphorolysis of single-stranded polyribonucleotides processively in the 3'- to 5'-direction. The chain is Polyribonucleotide nucleotidyltransferase from Shewanella woodyi (strain ATCC 51908 / MS32).